The chain runs to 142 residues: Hemoglobin subunit alpha (142 aa).

The Globin domain occupies 2-142 (VLSSADKNNV…VSTVLTSKYR (141 aa)). Phosphoserine is present on Ser-4. 2 positions are modified to N6-succinyllysine: Lys-8 and Lys-12. Lys-17 carries the N6-acetyllysine; alternate modification. The residue at position 17 (Lys-17) is an N6-succinyllysine; alternate. Tyr-25 is modified (phosphotyrosine). Ser-36 is subject to Phosphoserine. Lys-41 carries the N6-succinyllysine modification. Ser-50 is subject to Phosphoserine. His-59 provides a ligand contact to O2. His-88 is a binding site for heme b. Ser-103 bears the Phosphoserine mark. Thr-109 is modified (phosphothreonine). Ser-125 is subject to Phosphoserine. Thr-135 and Thr-138 each carry phosphothreonine. Ser-139 bears the Phosphoserine mark.

Belongs to the globin family. Heterotetramer of two alpha chains and two beta chains. Red blood cells.

Involved in oxygen transport from the lung to the various peripheral tissues. Functionally, hemopressin acts as an antagonist peptide of the cannabinoid receptor CNR1. Hemopressin-binding efficiently blocks cannabinoid receptor CNR1 and subsequent signaling. The chain is Hemoglobin subunit alpha (HBA) from Panthera leo (Lion).